A 336-amino-acid polypeptide reads, in one-letter code: Phosphate acyltransferase (336 aa).

This sequence belongs to the PlsX family. In terms of assembly, homodimer. Probably interacts with PlsY.

The protein localises to the cytoplasm. The enzyme catalyses a fatty acyl-[ACP] + phosphate = an acyl phosphate + holo-[ACP]. Its pathway is lipid metabolism; phospholipid metabolism. Catalyzes the reversible formation of acyl-phosphate (acyl-PO(4)) from acyl-[acyl-carrier-protein] (acyl-ACP). This enzyme utilizes acyl-ACP as fatty acyl donor, but not acyl-CoA. The polypeptide is Phosphate acyltransferase (Pseudomonas putida (strain ATCC 700007 / DSM 6899 / JCM 31910 / BCRC 17059 / LMG 24140 / F1)).